We begin with the raw amino-acid sequence, 763 residues long: MGEDTKATIEPTANKTTSLEKPSEAMAGKENAGGKETQELAKDEDMAEPDNMEIDAQIKKDDEKAETEDKESEVKKNEDNAETQKMEEKVEVTKDEGQAEATNMDEDADGKKEQTDDGVSVEDTVMKENVESKDNNYAKDDEKETKETDITEADHKKAGKEDIQHEADKANGTKDGNTGDIKEEGTLVDEDKGTDMDEKVENGDENKQVENVEGKEKEDKEENKTKEVEAAKAEVDESKVEDEKEGSEDENDNEKVESKDAKEDEKEETNDDKEDEKEESKGSKKRGKGTSSGGKVREKNKTEEVKKDAEPRTPFSDRPVRERKSVERLVALIDKDSSKEFRVEKGRGAYLKDIPNVANKVMRKRSDETLKLLHPILFGGRRGKAAQIKTNILGFSGFVWHGDEKKAKEKVKEKLEKCTKEKLWEFCDVLDIHITKATTKKEDIITKLFEFLEKPHVTGDVTGDTTVSEKEKSSKGAKRKRTPKKTSPTAGSSSSKRSAKSQKKSEEATKVVKKSLAHSDDESEEEKEEEEKQEEEKAEEKEEKKEEENENGIPDKSEDEAPQPSESEEKDESEEHSEEETTKKKRGSRLSAGKKESAGRARNKKAVVAAKSSPPEKITQKRSSAKRKKTDDDSDTSPKASSKRKKSENPIKASPAPSKSASKEKPVKRAGKGKDKPSDKVLKNAIVEILKRVDFSTATFTDILKELAKEFTEDLTPRKSSIKMIIQEELTKLADEEEEEEKKEEDSEKEEAGGSGGGEEVKA.

2 disordered regions span residues 1–324 (MGED…RERK) and 458–681 (TGDV…SDKV). Residues 11–20 (PTANKTTSLE) show a composition bias toward polar residues. Composition is skewed to basic and acidic residues over residues 32 to 44 (AGGK…AKDE), 72 to 97 (SEVK…KDEG), 124 to 172 (TVMK…KANG), and 180 to 242 (DIKE…KVED). A coiled-coil region spans residues 60 to 96 (KDDEKAETEDKESEVKKNEDNAETQKMEEKVEVTKDE). The stretch at 214–286 (GKEKEDKEEN…KEESKGSKKR (73 aa)) forms a coiled coil. The span at 243 to 252 (EKEGSEDEND) shows a compositional bias: acidic residues. Over residues 253–264 (NEKVESKDAKED) the composition is skewed to basic and acidic residues. Residues 265–277 (EKEETNDDKEDEK) are compositionally biased toward acidic residues. The short motif at 284-291 (KKRGKGTS) is the Nuclear localization signal 1 element. Residues 295–311 (KVREKNKTEEVKKDAEP) are compositionally biased toward basic and acidic residues. Positions 475-484 (KGAKRKRTPK) are enriched in basic residues. A Nuclear localization signal 2 motif is present at residues 483–490 (PKKTSPTA). The segment covering 485 to 496 (KTSPTAGSSSSK) has biased composition (low complexity). Residues 513-551 (KKSLAHSDDESEEEKEEEEKQEEEKAEEKEEKKEEENEN) are a coiled coil. A compositionally biased stretch (acidic residues) spans 521–533 (DESEEEKEEEEKQ). Over residues 534–547 (EEEKAEEKEEKKEE) the composition is skewed to basic and acidic residues. Acidic residues predominate over residues 557–578 (SEDEAPQPSESEEKDESEEHSE). Low complexity-rich tracts occupy residues 606 to 615 (AVVAAKSSPP) and 650 to 660 (PIKASPAPSKS). The segment covering 661 to 681 (ASKEKPVKRAGKGKDKPSDKV) has biased composition (basic and acidic residues). In terms of domain architecture, DEK-C spans 676–731 (KPSDKVLKNAIVEILKRVDFSTATFTDILKELAKEFTEDLTPRKSSIKMIIQEELT). 2 consecutive DNA-binding regions follow at residues 694–708 (DFST…KELA) and 723–727 (KMIIQ). The stretch at 723 to 753 (KMIIQEELTKLADEEEEEEKKEEDSEKEEAG) forms a coiled coil. Residues 730–763 (LTKLADEEEEEEKKEEDSEKEEAGGSGGGEEVKA) are disordered. Positions 753–763 (GGSGGGEEVKA) are enriched in gly residues.

Found in a mRNA splicing-dependent exon junction complex (EJC). Binds specifically histones H3 and H4. Interacts with TOP1A, SCC3, At1g61730, At1g20940, At1g13930, DEK4, HDT1, NIT1, SHL, CYP19-1, GEBPL, HSP70-3, PDP2, PDP3, KIN2, RPL11A and PDS5A. In terms of tissue distribution, highly expressed in young seedlings.

Its subcellular location is the nucleus. It localises to the nucleolus. Chromatin-associated protein which contributes to the modulation of chromatin structure (such as super-helical structure of DNA) and function. Binds to chromatin of protein-coding genes throughout the genome to regulate nucleosome occupancy and chromatin accessibility, and to modulate the expression of target genes. Negative regulator of stress tolerance (e.g. high salt). The protein is DEK domain-containing chromatin-associated protein 3 of Arabidopsis thaliana (Mouse-ear cress).